The primary structure comprises 2223 residues: Sperm-associated antigen 17 (2223 aa).

2 stretches are compositionally biased toward basic and acidic residues: residues 144–172 and 200–212; these read RENE…EKKA and RRGE…RYID. Positions 144-214 are disordered; the sequence is RENEKKVIED…DHTNRYIDDE (71 aa). Residues 266–295 are a coiled coil; the sequence is NQQQEVLLQSEDLEAEKLKKENAIKELKTF. Disordered regions lie at residues 387 to 416, 680 to 710, 731 to 762, 950 to 1015, 1179 to 1212, and 1345 to 1378; these read MPTS…PPPV, MSVQ…LNNL, PQHE…PKKM, EERL…EPKI, GKIK…PEPV, and ETIP…PPPE. Basic and acidic residues-rich tracts occupy residues 743–756, 950–999, and 1182–1205; these read EIKD…DSHE, EERL…EQVK, and KGKE…KKEE. Residues 940–966 adopt a coiled-coil conformation; sequence WKEEQHRLAEEERLREEKKAEKKGKEA. Positions 1345–1354 are enriched in polar residues; the sequence is ETIPSEITNT. Positions 1874 to 1907 form a coiled coil; sequence RHTASSKRWKEKIDKTRKEIETTQNYLMDIKNRI. 2 disordered regions span residues 1938-1957 and 1962-2008; these read TKKN…DLNL and HKVS…SYEP. Residues 1988–1998 are compositionally biased toward polar residues; that stretch reads TAQNQTENLTK.

In terms of assembly, interacts (via the C-terminus) with SPAG6; the interaction probably occurs on polymerized microtubules. In terms of tissue distribution, highly expressed in testis. Expressed in organs that contain cilia-bearing cells including brain, oviduct, lung, and uterus.

Its subcellular location is the cytoplasm. It is found in the cytoskeleton. The protein localises to the flagellum axoneme. It localises to the cytoplasmic vesicle. The protein resides in the secretory vesicle. Its subcellular location is the acrosome. It is found in the golgi apparatus. Component of the central pair apparatus of ciliary axonemes. Plays a critical role in the function and structure of motile cilia. May play a role in endochondral bone formation, most likely because of a function in primary cilia of chondrocytes and osteoblasts. Essential for normal spermatogenesis and male fertility. Required for normal manchette structure, transport of proteins along the manchette microtubules and formation of the sperm head and flagellum. Essential for sperm flagellum development and proper assembly of the respiratory motile cilia central pair apparatus, but not the brain ependymal cilia. The polypeptide is Sperm-associated antigen 17 (SPAG17) (Homo sapiens (Human)).